Consider the following 264-residue polypeptide: Hydroxyethylthiazole kinase (264 aa).

A substrate-binding site is contributed by Met-52. Positions 127 and 173 each coordinate ATP. Residue Gly-200 participates in substrate binding.

The protein belongs to the Thz kinase family. Requires Mg(2+) as cofactor.

It carries out the reaction 5-(2-hydroxyethyl)-4-methylthiazole + ATP = 4-methyl-5-(2-phosphooxyethyl)-thiazole + ADP + H(+). The protein operates within cofactor biosynthesis; thiamine diphosphate biosynthesis; 4-methyl-5-(2-phosphoethyl)-thiazole from 5-(2-hydroxyethyl)-4-methylthiazole: step 1/1. Its function is as follows. Catalyzes the phosphorylation of the hydroxyl group of 4-methyl-5-beta-hydroxyethylthiazole (THZ). In Pectobacterium atrosepticum (strain SCRI 1043 / ATCC BAA-672) (Erwinia carotovora subsp. atroseptica), this protein is Hydroxyethylthiazole kinase.